We begin with the raw amino-acid sequence, 451 residues long: E3 ubiquitin-protein ligase trul-1 (451 aa).

The RING-type; atypical zinc finger occupies 13-54 (CSICFEDLKQNDKISAIVCGHIYHHGCISQWIATKRQCPSCR). 2 coiled-coil regions span residues 96-130 (LKVEQEKLGTLNTENKNLKDTVKSLEKKIIREKDK) and 209-243 (NKDLTDKRREAAKEIEQLKMEVQSLKRAAQEDAAI). Disordered stretches follow at residues 270–297 (RDVLETETPPPAKRKSMGFDESSQMIDP) and 389–442 (KIPN…SSTS). Positions 427-442 (STRISSFFSRTTSSTS) are enriched in low complexity.

It belongs to the TRAIP family.

It is found in the nucleus. Its subcellular location is the chromosome. The catalysed reaction is S-ubiquitinyl-[E2 ubiquitin-conjugating enzyme]-L-cysteine + [acceptor protein]-L-lysine = [E2 ubiquitin-conjugating enzyme]-L-cysteine + N(6)-ubiquitinyl-[acceptor protein]-L-lysine.. It participates in protein modification; protein ubiquitination. E3 ubiquitin ligase that acts as a key regulator of DNA repair in response to replication stress. Acts by mediating ubiquitination of the CMG helicase complex, promoting the unloading of the CMG helicase complex by the p97 ATPase (cdc-48.1 or cdc-48.2). In Caenorhabditis elegans, this protein is E3 ubiquitin-protein ligase trul-1.